The chain runs to 260 residues: MLRKGDVNRVANAYWCVVAGSEIWLVDGAVPFGSAEQFSLPEENARQIGDYLGSPVMWINFADLEQDLPLVSLRDCLHFPEPLFMLLSKAIQYGHMTQSLRFCPQCGGRNFLNNNQFAMQCGECRTLHYPRIFPCIIVAVRKENQILLAQHPRHRNGMYTVIAGFLEAGETLEDCVAREVHEETGIHVKNIRYFGSQPWAFPSSMMMAFLADYDSGELNPDYTELSDAQWFGVKEMPPVAPTGTIARALIEQTISDILSD.

A substrate-binding site is contributed by R74. The Zn(2+) site is built by C103, C106, C121, and C124. Residue Y129 coordinates substrate. In terms of domain architecture, Nudix hydrolase spans 130–253; it reads PRIFPCIIVA…TIARALIEQT (124 aa). The a divalent metal cation site is built by A163, E179, and E183. A Nudix box motif is present at residues 164 to 185; that stretch reads GFLEAGETLEDCVAREVHEETG. 197 to 204 contacts substrate; sequence QPWAFPSS. E224 lines the a divalent metal cation pocket. A246 contacts substrate.

The protein belongs to the Nudix hydrolase family. NudC subfamily. In terms of assembly, homodimer. The cofactor is Mg(2+). Requires Mn(2+) as cofactor. Zn(2+) serves as cofactor.

It carries out the reaction a 5'-end NAD(+)-phospho-ribonucleoside in mRNA + H2O = a 5'-end phospho-adenosine-phospho-ribonucleoside in mRNA + beta-nicotinamide D-ribonucleotide + 2 H(+). It catalyses the reaction NAD(+) + H2O = beta-nicotinamide D-ribonucleotide + AMP + 2 H(+). The enzyme catalyses NADH + H2O = reduced beta-nicotinamide D-ribonucleotide + AMP + 2 H(+). MRNA decapping enzyme that specifically removes the nicotinamide adenine dinucleotide (NAD) cap from a subset of mRNAs by hydrolyzing the diphosphate linkage to produce nicotinamide mononucleotide (NMN) and 5' monophosphate mRNA. The NAD-cap is present at the 5'-end of some mRNAs and stabilizes RNA against 5'-processing. Has preference for mRNAs with a 5'-end purine. Catalyzes the hydrolysis of a broad range of dinucleotide pyrophosphates. The sequence is that of NAD-capped RNA hydrolase NudC from Vibrio parahaemolyticus serotype O3:K6 (strain RIMD 2210633).